The primary structure comprises 408 residues: Retron Ec48 reverse transcriptase (408 aa).

Positions 43-269 constitute a Reverse transcriptase domain; that stretch reads EELKAIAELP…EPIKVHGLRV (227 aa). Asp-137, Asp-216, and Asp-217 together coordinate Mg(2+).

This sequence belongs to the bacterial reverse transcriptase family.

The catalysed reaction is DNA(n) + a 2'-deoxyribonucleoside 5'-triphosphate = DNA(n+1) + diphosphate. Reverse transcriptase (RT) component of antiviral defense system retron Ec48, composed of a non-coding RNA (ncRNA), this reverse transcriptase (RT) and the following membrane protein. Expression of this retron confers protection against bacteriophages lambda, T2, T4, T5 and T7. At multiplicity of infection (MOI) of 0.02 cultures grow normally when infected with lambda without collapsing, at MOI 2 cultures enter growth stasis. At MOI 3 cell membranes are permeabilized within 15 minutes of infection but do not lyse, suggesting the phage are not able to finish a replication cycle. Antiviral defense is suppressed by mutations that knockout the lambda gam expression or phage T7 gp5.9 expression; both viral genes inhibit host RecBCD. The Ec48 retron may sense the integrity of the RecBCD enzyme; when RecBCD is perturbed by viral proteins the Ec48 effector (the membrane protein) is activated, leading to abortive infection and bacterial growth arrest. Responsible for synthesis of msDNA-Ec48 (a branched molecule with RNA linked by a 2',5'-phosphodiester bond to ssDNA). The retron transcript serves as primer (from a conserved internal G residue) and template for the reaction, and codes for the RT. This is Retron Ec48 reverse transcriptase from Escherichia coli.